The following is a 316-amino-acid chain: Coiled-coil domain-containing protein 42 (316 aa).

2 coiled-coil regions span residues 39-146 (SPSI…SAKL) and 178-232 (LVSM…DRAR).

The protein belongs to the CFAP73 family. Interacts with ODF1 and ODF2. Interacts with CCDC38. Interacts with CCDC146. Interacts with CFAP53.

It localises to the cytoplasm. The protein resides in the perinuclear region. The protein localises to the cytoskeleton. Its subcellular location is the cell projection. It is found in the cilium. It localises to the flagellum. The protein resides in the microtubule organizing center. The protein localises to the centrosome. Essential for male fertility. Required for sperm development. The protein is Coiled-coil domain-containing protein 42 of Homo sapiens (Human).